The sequence spans 101 residues: Small ribosomal subunit protein uS10 (101 aa).

This sequence belongs to the universal ribosomal protein uS10 family. Part of the 30S ribosomal subunit.

Its function is as follows. Involved in the binding of tRNA to the ribosomes. This chain is Small ribosomal subunit protein uS10, found in Mycobacterium avium (strain 104).